The following is a 634-amino-acid chain: DNA-directed RNA polymerase subunit gamma (634 aa).

Cysteine 74, cysteine 76, cysteine 89, and cysteine 92 together coordinate Zn(2+). Mg(2+) is bound by residues aspartate 471, aspartate 473, and aspartate 475.

It belongs to the RNA polymerase beta' chain family. RpoC1 subfamily. In cyanobacteria the RNAP catalytic core is composed of 2 alpha, 1 beta, 1 beta', 1 gamma and 1 omega subunit. When a sigma factor is associated with the core the holoenzyme is formed, which can initiate transcription. Mg(2+) serves as cofactor. Requires Zn(2+) as cofactor.

The catalysed reaction is RNA(n) + a ribonucleoside 5'-triphosphate = RNA(n+1) + diphosphate. DNA-dependent RNA polymerase catalyzes the transcription of DNA into RNA using the four ribonucleoside triphosphates as substrates. The chain is DNA-directed RNA polymerase subunit gamma from Prochlorococcus marinus (strain MIT 9515).